The chain runs to 199 residues: MAP6 domain-containing protein 1 (199 aa).

Residues Cys5, Cys10, and Cys11 are each lipidated (S-palmitoyl cysteine). Positions 33–110 (YSDLDSEEPG…SAQSSAPPAP (78 aa)) are disordered. Ser38 carries the phosphoserine modification. Mn stretches follow at residues 130–143 (TTSY…WTGV) and 165–177 (DSSP…VPEV). Phosphoserine is present on Ser167.

Belongs to the STOP family. In terms of assembly, interacts with calmodulin. Post-translationally, palmitoylated. Palmitoylation enhances association with microtubules.

It localises to the golgi apparatus. It is found in the cytoplasm. The protein localises to the cytoskeleton. Its function is as follows. May have microtubule-stabilizing activity. The sequence is that of MAP6 domain-containing protein 1 (MAP6D1) from Homo sapiens (Human).